Consider the following 278-residue polypeptide: Myb/SANT-like DNA-binding domain-containing protein 1 (278 aa).

The disordered stretch occupies residues 1 to 27 (MVRGAGPGPSLSALSHPTGASGMAAAE). The region spanning 44–129 (RNWTDAEMRG…PDWPYYLAID (86 aa)) is the Myb-like domain. Positions 138 to 168 (SCDGKLPDSQPPGPSTSQTEASLSPPAKSTP) are disordered.

This Homo sapiens (Human) protein is Myb/SANT-like DNA-binding domain-containing protein 1 (MSANTD1).